Here is a 931-residue protein sequence, read N- to C-terminus: ORF4 polyprotein (931 aa).

Proteolytic processing of ORF4 polyprotein yields the VP4a, VP4b and VP4c capsid proteins.

The protein resides in the virion. Functionally, ORF4 polyprotein codes for VP4a, VP4b, and VP4c, three of the four proteins that self-assemble to form the icosahedral capsid. The capsid is made of VP3 (coded by ORF3), VP4a, VP4b and VP4c. The chain is ORF4 polyprotein from Drosophila melanogaster (Fruit fly).